The chain runs to 125 residues: Small ribosomal subunit protein uS12 (125 aa).

The residue at position 89 (D89) is a 3-methylthioaspartic acid.

The protein belongs to the universal ribosomal protein uS12 family. In terms of assembly, part of the 30S ribosomal subunit. Contacts proteins S8 and S17. May interact with IF1 in the 30S initiation complex.

With S4 and S5 plays an important role in translational accuracy. Its function is as follows. Interacts with and stabilizes bases of the 16S rRNA that are involved in tRNA selection in the A site and with the mRNA backbone. Located at the interface of the 30S and 50S subunits, it traverses the body of the 30S subunit contacting proteins on the other side and probably holding the rRNA structure together. The combined cluster of proteins S8, S12 and S17 appears to hold together the shoulder and platform of the 30S subunit. The sequence is that of Small ribosomal subunit protein uS12 from Clostridium acetobutylicum (strain ATCC 824 / DSM 792 / JCM 1419 / IAM 19013 / LMG 5710 / NBRC 13948 / NRRL B-527 / VKM B-1787 / 2291 / W).